Consider the following 604-residue polypeptide: Protein CBFA2T2 (604 aa).

The tract at residues 25–105 is disordered; that stretch reads KRVPAMPGSP…SSTSSALTNQ (81 aa). Serine 33 is modified (phosphoserine). Lysine 38 is covalently cross-linked (Glycyl lysine isopeptide (Lys-Gly) (interchain with G-Cter in SUMO2)). The span at 46-59 shows a compositional bias: pro residues; sequence PTMPPLPPINPGGP. Composition is skewed to polar residues over residues 64–79 and 88–105; these read FTPT…SPPT and QRFS…LTNQ. The segment at 107–215 is interaction with PRDM14; it reads LPATCGARQL…QHEHLLLNTS (109 aa). Residues 113–208 form the TAFH domain; it reads ARQLSKLKRF…TPSQYLAQHE (96 aa). The interval 229-265 is disordered; the sequence is VHGNGKRPSPERREENSFDRDTIAPEPPAKRVCTISP. Over residues 236 to 251 the composition is skewed to basic and acidic residues; it reads PSPERREENSFDRDTI. Serine 264 is subject to Phosphoserine. Positions 331 to 377 are nervy homology region 2 (NHR2); that stretch reads QDELVDHRLTEREWADEWKHLDHALNCIMEMVEKTRRSMAVLRRCQE. A disordered region spans residues 397–427; that stretch reads RKTGTELVSRQHSPGSADSLSNDSQREFNSR. The segment covering 402 to 419 has biased composition (polar residues); sequence ELVSRQHSPGSADSLSND. Position 409 is a phosphoserine (serine 409). A nervy homology region 3 (NHR3) region spans residues 435–484; it reads VEFWKKTEEAVNKVKIQAMSEVQKAVAEAEQKAFEVIATERARMEQTIAD. Lysine 449 is covalently cross-linked (Glycyl lysine isopeptide (Lys-Gly) (interchain with G-Cter in SUMO2)). Residues 451 to 491 adopt a coiled-coil conformation; the sequence is QAMSEVQKAVAEAEQKAFEVIATERARMEQTIADVKRQAAE. Zn(2+) is bound by residues cysteine 507, cysteine 510, cysteine 518, cysteine 521, cysteine 527, cysteine 531, histidine 539, and cysteine 543. An MYND-type zinc finger spans residues 507-543; it reads CWNCGRKASETCSGCNIARYCGSFCQHKDWERHHRLC. Positions 547-604 are disordered; it reads LHGQSPHGQGRPLLPVGRGSSARSADCSVPSPALDKTSATTSRSSTPASVTAIDTNGL. Serine 577 is subject to Phosphoserine. Low complexity predominate over residues 583-598; sequence TSATTSRSSTPASVTA.

Belongs to the CBFA2T family. In terms of assembly, homooligomer. Homotetramerization is mediated by nervy homology region 2. Can interact with RUNX1T1/CBFA2T1 and CBFA2T3/MTG16; heterotetramerization between members of the CBFA2T family is proposed. Forms a heterooligomer with the AML1-MTG8/ETO fusion protein. Interacts with PRDM14. Interacts with RBPJ, GFI1, TCF4. Interacts with TAL1 and CBFA2T3/MTG16; the heteromer with CBFA2T3/MTG16 may function in repression of TAL1. Ubiquitously expressed in fetal and adult tissues. Highly expressed in adult brain, heart, lung, kidney, lymph node, appendix, thymus, testis, uterus, small intestine, prostate and thymus.

The protein resides in the nucleus. In terms of biological role, transcriptional corepressor which facilitates transcriptional repression via its association with DNA-binding transcription factors and recruitment of other corepressors and histone-modifying enzymes. Via association with PRDM14 is involved in regulation of embryonic stem cell (ESC) pluripotency. Involved in primordial germ cell (PCG) formation. Stabilizes PRDM14 and OCT4 on chromatin in a homooligomerization-dependent manner. Can repress the expression of MMP7 in a ZBTB33-dependent manner. May function as a complex with the chimeric protein RUNX1/AML1-CBFA2T1/MTG8 (AML1-MTG8/ETO fusion protein) which is produced in acute myeloid leukemia with the chromosomal translocation t(8;21). May thus be involved in the repression of AML1-dependent transcription and the induction of G-CSF/CSF3-dependent cell growth. May be a tumor suppressor gene candidate involved in myeloid tumors with the deletion of the 20q11 region. Through heteromerization with CBFA2T3/MTG16 may be involved in regulation of the proliferation and the differentiation of erythroid progenitors by repressing the expression of TAL1 target genes. Required for the maintenance of the secretory cell lineage in the small intestine. Can inhibit Notch signaling probably by association with RBPJ and may be involved in GFI1-mediated Paneth cell differentiation. The protein is Protein CBFA2T2 (CBFA2T2) of Homo sapiens (Human).